The sequence spans 856 residues: Structure-specific endonuclease subunit SLX4 (856 aa).

Polar residues predominate over residues 1-19 (MDNAAIASQSNTPPSNGRS). 9 disordered regions span residues 1–24 (MDNAAIASQSNTPPSNGRSSARFV), 38–65 (VIEPSSPFSPPSPSTLLTSLSKSPSHKI), 88–121 (VDSPKRQDKSITGSKAKPASTMRHGQRTASHKMA), 139–202 (KTRK…DNEL), 296–326 (GIQTPTESRPATNDSQSISSKQQRVKVKKPQ), 362–392 (KKMGVTKRTSGTERANAARGKSDTLKNGNGP), 621–640 (SKSSKLEPKPNQRNHKSQGD), 668–689 (RLAKTSVKSQEPKSFSLSNEGP), and 715–742 (DSVGEALPLSPSHSSNGNGTLHHPQDCD). Positions 51 to 60 (STLLTSLSKS) are enriched in low complexity. The segment covering 139-152 (KTRKKKAATAKRTR) has biased composition (basic residues). Residues 296–309 (GIQTPTESRPATND) show a composition bias toward polar residues. A compositionally biased stretch (polar residues) spans 673 to 686 (SVKSQEPKSFSLSN).

Belongs to the SLX4 family. Forms a heterodimer with SLX1. In terms of processing, phosphorylated in response to DNA damage.

It localises to the nucleus. In terms of biological role, regulatory subunit of the SLX1-SLX4 structure-specific endonuclease that resolves DNA secondary structures generated during DNA repair and recombination. Has endonuclease activity towards branched DNA substrates, introducing single-strand cuts in duplex DNA close to junctions with ss-DNA. This chain is Structure-specific endonuclease subunit SLX4, found in Blastomyces gilchristii (strain SLH14081) (Blastomyces dermatitidis).